Here is a 332-residue protein sequence, read N- to C-terminus: UDP-N-acetylenolpyruvoylglucosamine reductase (332 aa).

Residues 15–184 enclose the FAD-binding PCMH-type domain; that stretch reads IDVSAACFLE…TYVSFRLSKR (170 aa). Residue Arg-160 is part of the active site. Ser-232 acts as the Proton donor in catalysis. Residue Glu-328 is part of the active site.

This sequence belongs to the MurB family. FAD is required as a cofactor.

The protein localises to the cytoplasm. It carries out the reaction UDP-N-acetyl-alpha-D-muramate + NADP(+) = UDP-N-acetyl-3-O-(1-carboxyvinyl)-alpha-D-glucosamine + NADPH + H(+). Its pathway is cell wall biogenesis; peptidoglycan biosynthesis. Its function is as follows. Cell wall formation. This Bacteroides fragilis (strain ATCC 25285 / DSM 2151 / CCUG 4856 / JCM 11019 / LMG 10263 / NCTC 9343 / Onslow / VPI 2553 / EN-2) protein is UDP-N-acetylenolpyruvoylglucosamine reductase.